The chain runs to 449 residues: Phosphoglucosamine mutase (449 aa).

The Phosphoserine intermediate role is filled by Ser100. Positions 100, 241, 243, and 245 each coordinate Mg(2+). Position 100 is a phosphoserine (Ser100).

The protein belongs to the phosphohexose mutase family. Requires Mg(2+) as cofactor. Activated by phosphorylation.

The enzyme catalyses alpha-D-glucosamine 1-phosphate = D-glucosamine 6-phosphate. Its function is as follows. Catalyzes the conversion of glucosamine-6-phosphate to glucosamine-1-phosphate. The chain is Phosphoglucosamine mutase from Clostridium botulinum (strain Loch Maree / Type A3).